The sequence spans 589 residues: Guanylate-binding protein 2 (589 aa).

Residues 1–309 form a GTPase domain (Globular) region; that stretch reads MASEIHMLQP…GAISSGSLPC (309 aa). Positions 35 to 276 constitute a GB1/RHD3-type G domain; the sequence is NQPVVVVAIV…FTSYIFSYSA (242 aa). GTP contacts are provided by residues 45–52, 181–182, and Leu245; these read GLYRTGKS and RD. Residue Cys586 is modified to Cysteine methyl ester. Residue Cys586 is the site of S-geranylgeranyl cysteine attachment. Residues 587-589 constitute a propeptide, removed in mature form; sequence TIL.

It belongs to the TRAFAC class dynamin-like GTPase superfamily. GB1/RHD3 GTPase family. GB1 subfamily. In terms of assembly, homodimer; homodimerization occurs upon GTP-binding and is required for the association with membranous structures. Heterodimer with other family members, including GBP1, GBP3, GBP4 and GBP5. In terms of processing, isoprenylation is required for proper subcellular location. As to expression, widely expressed.

Its subcellular location is the cytoplasmic vesicle membrane. It localises to the golgi apparatus membrane. The protein localises to the cytoplasm. The protein resides in the perinuclear region. It catalyses the reaction GTP + H2O = GDP + phosphate + H(+). Interferon (IFN)-inducible GTPase that plays important roles in innate immunity against a diverse range of bacterial, viral and protozoan pathogens. Hydrolyzes GTP to GMP in 2 consecutive cleavage reactions, but the major reaction product is GDP. Following infection, recruited to the pathogen-containing vacuoles or vacuole-escaped bacteria and acts as a positive regulator of inflammasome assembly by promoting the release of inflammasome ligands from bacteria. Acts by promoting lysis of pathogen-containing vacuoles, releasing pathogens into the cytosol. Following pathogen release in the cytosol, promotes recruitment of proteins that mediate bacterial cytolysis: this liberates ligands that are detected by inflammasomes, such as lipopolysaccharide (LPS) that activates the non-canonical CASP4/CASP11 inflammasome or double-stranded DNA (dsDNA) that activates the AIM2 inflammasome. Confers protection to the protozoan pathogen Toxoplasma gondii. Independently of its GTPase activity, acts as an inhibitor of various viruses infectivity by inhibiting FURIN-mediated maturation of viral envelope proteins. This Rattus norvegicus (Rat) protein is Guanylate-binding protein 2 (Gbp2).